A 252-amino-acid chain; its full sequence is Type II secretion system protein N (252 aa).

At 1 to 4 (MKQK) the chain is on the cytoplasmic side. The chain crosses the membrane as a helical span at residues 5-25 (VLIAALFLVAYLGFLLVKLPA). The Periplasmic segment spans residues 26 to 252 (TLVVRHLPLP…RFPLRYQGRI (227 aa)).

It belongs to the GSP N family.

The protein localises to the cell inner membrane. Its function is as follows. Involved in a type II secretion system (T2SS, formerly general secretion pathway, GSP) for the export of proteins. The sequence is that of Type II secretion system protein N (exeN) from Aeromonas hydrophila.